A 74-amino-acid polypeptide reads, in one-letter code: ATP synthase subunit c (74 aa).

2 consecutive transmembrane segments (helical) span residues 5-25 (LAHI…IGVG) and 49-69 (LFIG…VALL).

It belongs to the ATPase C chain family. In terms of assembly, F-type ATPases have 2 components, F(1) - the catalytic core - and F(0) - the membrane proton channel. F(1) has five subunits: alpha(3), beta(3), gamma(1), delta(1), epsilon(1). F(0) has three main subunits: a(1), b(2) and c(10-14). The alpha and beta chains form an alternating ring which encloses part of the gamma chain. F(1) is attached to F(0) by a central stalk formed by the gamma and epsilon chains, while a peripheral stalk is formed by the delta and b chains.

Its subcellular location is the cell inner membrane. Functionally, f(1)F(0) ATP synthase produces ATP from ADP in the presence of a proton or sodium gradient. F-type ATPases consist of two structural domains, F(1) containing the extramembraneous catalytic core and F(0) containing the membrane proton channel, linked together by a central stalk and a peripheral stalk. During catalysis, ATP synthesis in the catalytic domain of F(1) is coupled via a rotary mechanism of the central stalk subunits to proton translocation. In terms of biological role, key component of the F(0) channel; it plays a direct role in translocation across the membrane. A homomeric c-ring of between 10-14 subunits forms the central stalk rotor element with the F(1) delta and epsilon subunits. This chain is ATP synthase subunit c, found in Ruegeria pomeroyi (strain ATCC 700808 / DSM 15171 / DSS-3) (Silicibacter pomeroyi).